The chain runs to 503 residues: ATP synthase subunit alpha (503 aa).

Position 170 to 177 (170 to 177 (GDRQTGKT)) interacts with ATP.

Belongs to the ATPase alpha/beta chains family. In terms of assembly, F-type ATPases have 2 components, CF(1) - the catalytic core - and CF(0) - the membrane proton channel. CF(1) has five subunits: alpha(3), beta(3), gamma(1), delta(1), epsilon(1). CF(0) has three main subunits: a(1), b(2) and c(9-12). The alpha and beta chains form an alternating ring which encloses part of the gamma chain. CF(1) is attached to CF(0) by a central stalk formed by the gamma and epsilon chains, while a peripheral stalk is formed by the delta and b chains.

The protein localises to the cell inner membrane. The enzyme catalyses ATP + H2O + 4 H(+)(in) = ADP + phosphate + 5 H(+)(out). In terms of biological role, produces ATP from ADP in the presence of a proton gradient across the membrane. The alpha chain is a regulatory subunit. This chain is ATP synthase subunit alpha, found in Geobacter sulfurreducens (strain ATCC 51573 / DSM 12127 / PCA).